The following is a 128-amino-acid chain: Glyoxylase-like domain-containing protein (128 aa).

The region spanning 6 to 125 (QISGIEIPAT…EGNTHAICTR (120 aa)) is the VOC domain.

Its pathway is mycotoxin biosynthesis. In terms of biological role, glyoxylase-like domain-containing protein; part of the gene cluster that mediates the biosynthesis of the selective antifungal agent ascochitine, an o-quinone methide that plays a possible protective role against other microbial competitors in nature and is considered to be important for pathogenicity of legume-associated Didymella species. The pathway probably begins with the synthesis of a keto-aldehyde intermediate by the ascochitine non-reducing polyketide synthase pksAC from successive condensations of 4 malonyl-CoA units, presumably with a simple acetyl-CoA starter unit. Release of the keto-aldehyde intermediate is consistent with the presence of the C-terminal reductive release domain. The HR-PKS (orf7) probably makes a diketide starter unit which is passed to the non-reducing polyketide synthase pksAC for further extension, producing ascochital and ascochitine. The aldehyde dehydrogenase (orf1), the 2-oxoglutarate-dependent dioxygenase (orf3) and the dehydrogenase (orf9) are probably involved in subsequent oxidations of methyl groups to the carboxylic acid of the heterocyclic ring. The ascochitine gene cluster also includes a gene encoding a short peptide with a cupin domain (orf2) that is often found in secondary metabolite gene clusters and which function has still to be determined. This chain is Glyoxylase-like domain-containing protein, found in Didymella fabae (Leaf and pod spot disease fungus).